We begin with the raw amino-acid sequence, 182 residues long: Adenine phosphoribosyltransferase (182 aa).

It belongs to the purine/pyrimidine phosphoribosyltransferase family. In terms of assembly, homodimer.

The protein resides in the cytoplasm. The catalysed reaction is AMP + diphosphate = 5-phospho-alpha-D-ribose 1-diphosphate + adenine. It functions in the pathway purine metabolism; AMP biosynthesis via salvage pathway; AMP from adenine: step 1/1. Its function is as follows. Catalyzes a salvage reaction resulting in the formation of AMP, that is energically less costly than de novo synthesis. The protein is Adenine phosphoribosyltransferase of Pseudomonas fluorescens (strain Pf0-1).